The following is a 307-amino-acid chain: D-alanine--D-alanine ligase (307 aa).

Residues R101–D301 form the ATP-grasp domain. Residue L128 to T182 coordinates ATP. Mg(2+) is bound by residues D251, E268, and N270.

The protein belongs to the D-alanine--D-alanine ligase family. The cofactor is Mg(2+). Mn(2+) serves as cofactor.

Its subcellular location is the cytoplasm. The enzyme catalyses 2 D-alanine + ATP = D-alanyl-D-alanine + ADP + phosphate + H(+). Its pathway is cell wall biogenesis; peptidoglycan biosynthesis. Cell wall formation. This is D-alanine--D-alanine ligase from Beijerinckia indica subsp. indica (strain ATCC 9039 / DSM 1715 / NCIMB 8712).